Here is a 231-residue protein sequence, read N- to C-terminus: NADH-ubiquinone oxidoreductase chain 4 (231 aa).

The next 6 membrane-spanning stretches (helical) occupy residues 1-21, 34-54, 63-85, 89-111, 124-146, and 169-189; these read PIAGSMVLAAILLKLGGYGII, LFLPFIVLALWGAILANLTCL, IAYSSISHMGLVVAAIIIQTPWG, AMALMIAHGFTSSALFCLANMTY, GLHNTLPMATTWWLMTNLMNIAI, and TIIILGLSMLITASYSLHMFL.

This sequence belongs to the complex I subunit 4 family.

It localises to the mitochondrion membrane. The catalysed reaction is a ubiquinone + NADH + 5 H(+)(in) = a ubiquinol + NAD(+) + 4 H(+)(out). Functionally, core subunit of the mitochondrial membrane respiratory chain NADH dehydrogenase (Complex I) that is believed to belong to the minimal assembly required for catalysis. Complex I functions in the transfer of electrons from NADH to the respiratory chain. The immediate electron acceptor for the enzyme is believed to be ubiquinone. This chain is NADH-ubiquinone oxidoreductase chain 4 (MT-ND4), found in Crotalus lepidus (Banded rock rattlesnake).